The sequence spans 207 residues: Dephospho-CoA kinase (207 aa).

The 198-residue stretch at 10–207 folds into the DPCK domain; it reads ILGLTGGIGS…FYLTLRGGQS (198 aa). 18 to 23 lines the ATP pocket; it reads GSGKSA.

Belongs to the CoaE family.

It is found in the cytoplasm. It carries out the reaction 3'-dephospho-CoA + ATP = ADP + CoA + H(+). It functions in the pathway cofactor biosynthesis; coenzyme A biosynthesis; CoA from (R)-pantothenate: step 5/5. Its function is as follows. Catalyzes the phosphorylation of the 3'-hydroxyl group of dephosphocoenzyme A to form coenzyme A. The protein is Dephospho-CoA kinase of Pseudomonas syringae pv. tomato (strain ATCC BAA-871 / DC3000).